A 316-amino-acid chain; its full sequence is Protein C4 (316 aa).

It belongs to the poxviridae OPG031 protein family.

It is found in the host cytoplasm. It localises to the host nucleus. Its function is as follows. Plays a role in the inhibition of host NF-kappa-B activation. Mechanistically, blocks the subunit p65/RELA translocation into the host nucleus. This is Protein C4 (OPG031) from Homo sapiens (Human).